A 736-amino-acid chain; its full sequence is Alpha-xylosidase A (736 aa).

A signal peptide spans 1–18 (MYFSSFLALGALVQAAAA). N24, N279, N332, and N376 each carry an N-linked (GlcNAc...) asparagine glycan. Residue D413 is part of the active site. A glycan (N-linked (GlcNAc...) asparagine) is linked at N471. The active-site Proton donor is D505. N-linked (GlcNAc...) asparagine glycans are attached at residues N655, N676, N690, and N701.

It belongs to the glycosyl hydrolase 31 family.

The protein localises to the secreted. The enzyme catalyses Hydrolysis of terminal, non-reducing alpha-D-xylose residues with release of alpha-D-xylose.. Functionally, catalyzes the liberation of alpha-xylose from the non-reducing terminal glucose of xyloglucan oligosaccharides. The polypeptide is Alpha-xylosidase A (Aspergillus niger (strain ATCC MYA-4892 / CBS 513.88 / FGSC A1513)).